The sequence spans 230 residues: Gilatoxin (230 aa).

Positions 1–230 (IIGGQECDET…ISFLFWIQSI (230 aa)) constitute a Peptidase S1 domain. 5 disulfide bridges follow: C7/C146, C26/C42, C125/C193, C157/C172, and C183/C208. H41 serves as the catalytic Charge relay system. Residue N84 is glycosylated (N-linked (GlcNAc...) asparagine). The Charge relay system role is filled by D93. The active-site Charge relay system is S187.

It belongs to the peptidase S1 family. Extensively glycosylated, contains approximately 8 mol of monosaccharide per mol of toxin. As to expression, expressed by the mandibular venom gland.

Its subcellular location is the secreted. In terms of biological role, has kallikrein-like activity, releases bradykinin from kininogen. Catalyzes the hydrolysis of various arginine ester substrates for trypsin and thrombin and degrades both angiotensin I and II by cleavage of the dipeptide Asp-Arg from the NH2-terminal end. Fibrinogen is also degraded but a fibrin clot is not produced. May have a potentiating effect on potent hemorrhagic toxins present in the venom. The sequence is that of Gilatoxin from Heloderma horridum horridum (Mexican beaded lizard).